Here is a 298-residue protein sequence, read N- to C-terminus: Tyrosine recombinase XerD (298 aa).

Residues 2-87 (KQELARIEQF…AVRRLFQYLY (86 aa)) enclose the Core-binding (CB) domain. In terms of domain architecture, Tyr recombinase spans 108-292 (RLPKDLSEAQ…ATERLRQLHQ (185 aa)). Residues arginine 148, lysine 172, histidine 244, arginine 247, and histidine 270 contribute to the active site. Tyrosine 279 functions as the O-(3'-phospho-DNA)-tyrosine intermediate in the catalytic mechanism.

This sequence belongs to the 'phage' integrase family. XerD subfamily. Forms a cyclic heterotetrameric complex composed of two molecules of XerC and two molecules of XerD, in which XerC interacts with XerD via its C-terminal region, XerD interacts with XerC via its C-terminal region and so on.

It localises to the cytoplasm. FtsK may regulate the catalytic switch between XerC and XerD in the heterotetrameric complex during the two steps of the recombination process. In terms of biological role, site-specific tyrosine recombinase, which acts by catalyzing the cutting and rejoining of the recombining DNA molecules. Binds cooperatively to specific DNA consensus sequences that are separated from XerC binding sites by a short central region, forming the heterotetrameric XerC-XerD complex that recombines DNA substrates. The complex is essential to convert dimers of the bacterial chromosome into monomers to permit their segregation at cell division. It also contributes to the segregational stability of plasmids. In the complex XerD specifically exchanges the bottom DNA strands. The polypeptide is Tyrosine recombinase XerD (Shigella flexneri).